Reading from the N-terminus, the 240-residue chain is Putative truncated effector protein hopW1-2 (240 aa).

The interval 1-32 is disordered; sequence MSPAQIIRTSHSFPPSFTGTSSSAENSHAQSP. Positions 9–23 are enriched in low complexity; that stretch reads TSHSFPPSFTGTSSS.

This sequence belongs to the HopW family.

The chain is Putative truncated effector protein hopW1-2 (hopW1-2) from Pseudomonas syringae pv. maculicola.